The following is a 438-amino-acid chain: Protein kinase PINOID (438 aa).

Residues Met1–Ser24 form a disordered region. Residues Leu11–Ser24 are compositionally biased toward polar residues. In terms of domain architecture, Protein kinase spans Phe75–Phe394. ATP is bound by residues Ile81–Val89 and Lys109. Catalysis depends on Asp205, which acts as the Proton acceptor. In terms of domain architecture, AGC-kinase C-terminal spans Lys395 to Phe438.

This sequence belongs to the protein kinase superfamily. Ser/Thr protein kinase family. In terms of assembly, interacts with PDK1, CML12 and PBP1. Component of a complex made of PINs (e.g. PIN1 and PIN2), MAB4/MELs (e.g. NPY1/MAB4 and NPY5/MEL1) and AGC kinases (e.g. D6PK and PID) at the plasma membrane. Binds directly to PIN2, NPY1/MAB4 and NPY5/MEL1. In terms of processing, autophosphorylated. Phosphorylated by PDK1. In terms of tissue distribution, expressed in root hair cells, shoot xylem parenchyma cells and endodermis around the vasculature. Expressed in anther primordia, vasculature of the growing flower stalk, young pedicels and bracts and developing sepals, but not in petals. In pistils, transiently expressed in the vasculature of the style and the septum, and in the integuments and funiculus of the developing ovule.

The protein resides in the cytoplasm. Its subcellular location is the cytosol. It localises to the cell membrane. The enzyme catalyses L-seryl-[protein] + ATP = O-phospho-L-seryl-[protein] + ADP + H(+). It carries out the reaction L-threonyl-[protein] + ATP = O-phospho-L-threonyl-[protein] + ADP + H(+). With respect to regulation, activated by magnesium and PDK1. Inhibited by staurosporine. Repressed by calcium. Serine/threonine-protein kinase involved in the regulation of auxin signaling. Acts as a positive regulator of cellular auxin efflux and regulates organ development by enhancing polar auxin transport. Phosphorylates conserved serine residues in the PIN auxin efflux carriers. Phosphorylation of PIN proteins is required and sufficient for apical-basal PIN polarity that enables directional intercellular auxin fluxes, which mediate differential growth, tissue patterning and organogenesis. Phosphorylates PIN proteins (e.g. PIN1 and PIN2), especially when NPY proteins (e.g. NPY1/MAB4 and NPY5/MEL1) are recruited at the plasma membrane; this enhances the polarized localizations (apical or basal) of PINs in the cell by limiting their lateral diffusion-based escape. Acts in association with PIN1 to control the establishment of bilateral symmetry and promotion of cotyledon outgrowth. Regulates root gravitropism through modulation of PIN2-dependent basipetal auxin transport. Required for polarization of PIN3-dependent auxin transport for hypocotyl gravitropic response. The protein kinase activity of PID is essential for its auxin efflux regulatory function. PID kinase and PP2A phosphatase activities antagonistically regulate phosphorylation of PIN proteins, affecting PIN sorting. This is Protein kinase PINOID from Arabidopsis thaliana (Mouse-ear cress).